The primary structure comprises 544 residues: GMP synthase [glutamine-hydrolyzing] (544 aa).

The region spanning 12-210 is the Glutamine amidotransferase type-1 domain; that stretch reads TILILDFGSQ…VKNVCGVRDG (199 aa). Cysteine 88 acts as the Nucleophile in catalysis. Active-site residues include histidine 184 and glutamate 186. One can recognise a GMPS ATP-PPase domain in the interval 211 to 419; the sequence is WSMESFIPKE…LNIPEHLVGR (209 aa). ATP is bound at residue 239–245; sequence SGGVDST. Residues arginine 312, aspartate 481, lysine 536, and glutamate 542 each coordinate XMP.

Homodimer. Also forms a small population of homotetramers. The cofactor is Mg(2+).

It is found in the cytoplasm. The protein localises to the cytosol. The catalysed reaction is XMP + L-glutamine + ATP + H2O = GMP + L-glutamate + AMP + diphosphate + 2 H(+). The protein operates within purine metabolism; GMP biosynthesis; GMP from XMP (L-Gln route): step 1/1. With respect to regulation, the enzyme is inhibited by ECC1385; although this compound fails to inhibit growth of the organism. Its function is as follows. Catalyzes the conversion of xanthine monophosphate (XMP) to GMP in the presence of glutamine and ATP through an adenyl-XMP intermediate. The sequence is that of GMP synthase [glutamine-hydrolyzing] from Cryptococcus neoformans var. grubii serotype A (strain H99 / ATCC 208821 / CBS 10515 / FGSC 9487) (Filobasidiella neoformans var. grubii).